Here is a 180-residue protein sequence, read N- to C-terminus: NEDD8-conjugating enzyme ubc-12 (180 aa).

The UBC core domain occupies 24–180 (VRDKLLAQEL…RVREYISRYC (157 aa)). Residue cysteine 112 is the Glycyl thioester intermediate of the active site.

This sequence belongs to the ubiquitin-conjugating enzyme family. UBC12 subfamily.

The protein resides in the cytoplasm. It carries out the reaction [E1 NEDD8-activating enzyme]-S-[NEDD8 protein]-yl-L-cysteine + [E2 NEDD8-conjugating enzyme]-L-cysteine = [E1 NEDD8-activating enzyme]-L-cysteine + [E2 NEDD8-conjugating enzyme]-S-[NEDD8-protein]-yl-L-cysteine.. Its pathway is protein modification; protein neddylation. Its function is as follows. Accepts the ubiquitin-like protein NEDD8 from the uba-3-ula-1 E1 complex and catalyzes its covalent attachment to other proteins. Plays a role in male tail tip morphogenesis. The sequence is that of NEDD8-conjugating enzyme ubc-12 from Caenorhabditis elegans.